The following is a 150-amino-acid chain: Endoribonuclease YbeY (150 aa).

Zn(2+)-binding residues include His112, His116, and His122.

Belongs to the endoribonuclease YbeY family. Zn(2+) serves as cofactor.

It is found in the cytoplasm. Functionally, single strand-specific metallo-endoribonuclease involved in late-stage 70S ribosome quality control and in maturation of the 3' terminus of the 16S rRNA. The sequence is that of Endoribonuclease YbeY from Bdellovibrio bacteriovorus (strain ATCC 15356 / DSM 50701 / NCIMB 9529 / HD100).